The primary structure comprises 154 residues: Nitrogen regulatory protein (154 aa).

The 145-residue stretch at 6 to 150 (QILTPGRSLV…EALYQIVVDV (145 aa)) folds into the PTS EIIA type-2 domain. Residue histidine 68 is the Tele-phosphohistidine intermediate of the active site.

The protein resides in the cytoplasm. Its function is as follows. Seems to have a role in regulating nitrogen assimilation. The chain is Nitrogen regulatory protein (ptsN) from Pseudomonas aeruginosa (strain ATCC 15692 / DSM 22644 / CIP 104116 / JCM 14847 / LMG 12228 / 1C / PRS 101 / PAO1).